The sequence spans 473 residues: Phenolic acid decarboxylase (473 aa).

Residues asparagine 160, histidine 182, and glutamate 224 each coordinate Mn(2+). Prenylated FMN is bound by residues 160-165 and 181-182; these read NVGIYR and QH. Glutamate 273 functions as the Proton donor in the catalytic mechanism.

The protein belongs to the UbiD family. YclC subfamily. Requires prenylated FMN as cofactor. The cofactor is Mn(2+).

The catalysed reaction is 4-hydroxybenzoate + H(+) = phenol + CO2. It carries out the reaction vanillate + H(+) = guaiacol + CO2. Functionally, involved in the non-oxidative decarboxylation and detoxification of phenolic derivatives under both aerobic and anaerobic conditions. Phenolic acid decarboxylase that catalyzes the reversible decarboxylation of 4-hydroxybenzoate and vanillate. Could also catalyze the decarboxylation of salicylate. Is not active on di- and tri-hydroxybenzoate derivatives. In Bacillus subtilis (strain 168), this protein is Phenolic acid decarboxylase.